We begin with the raw amino-acid sequence, 305 residues long: UDP-3-O-acyl-N-acetylglucosamine deacetylase (305 aa).

3 residues coordinate Zn(2+): histidine 79, histidine 238, and aspartate 242. Histidine 265 acts as the Proton donor in catalysis.

Belongs to the LpxC family. Zn(2+) serves as cofactor.

It catalyses the reaction a UDP-3-O-[(3R)-3-hydroxyacyl]-N-acetyl-alpha-D-glucosamine + H2O = a UDP-3-O-[(3R)-3-hydroxyacyl]-alpha-D-glucosamine + acetate. It functions in the pathway glycolipid biosynthesis; lipid IV(A) biosynthesis; lipid IV(A) from (3R)-3-hydroxytetradecanoyl-[acyl-carrier-protein] and UDP-N-acetyl-alpha-D-glucosamine: step 2/6. Its function is as follows. Catalyzes the hydrolysis of UDP-3-O-myristoyl-N-acetylglucosamine to form UDP-3-O-myristoylglucosamine and acetate, the committed step in lipid A biosynthesis. The chain is UDP-3-O-acyl-N-acetylglucosamine deacetylase from Salmonella arizonae (strain ATCC BAA-731 / CDC346-86 / RSK2980).